The following is an 88-amino-acid chain: Small ribosomal subunit protein bS20 (88 aa).

Positions 1–27 (MANIPSAKKRARQAEKRRKHNQSQRSM) are disordered. The segment covering 7–22 (AKKRARQAEKRRKHNQ) has biased composition (basic residues).

This sequence belongs to the bacterial ribosomal protein bS20 family.

Binds directly to 16S ribosomal RNA. The polypeptide is Small ribosomal subunit protein bS20 (Alkalilimnicola ehrlichii (strain ATCC BAA-1101 / DSM 17681 / MLHE-1)).